Here is a 117-residue protein sequence, read N- to C-terminus: Transcription elongation factor A protein-like 8 (117 aa).

The tract at residues 1 to 81 (MQKSCDENEG…PEEVIRGVDE (81 aa)) is disordered. The span at 41-81 (NVREETDGSLRGEPAEPSPEPKEDTPARHLNPEEVIRGVDE) shows a compositional bias: basic and acidic residues. Residues 73 to 100 (EEVIRGVDELERLREEIRRVRNKFVLMH) adopt a coiled-coil conformation.

Belongs to the TFS-II family. TFA subfamily. Highly expressed in kidney. Moderately expressed in heart and lung. Low expression in brain and liver. Expression is up-regulated in nephrectomized kidney.

Its subcellular location is the nucleus. Functionally, may be involved in transcriptional regulation. This Rattus norvegicus (Rat) protein is Transcription elongation factor A protein-like 8 (Tceal8).